The sequence spans 744 residues: Cytoskeleton-associated protein 2-like (744 aa).

Disordered regions lie at residues 35 to 56, 76 to 169, 182 to 216, 317 to 337, and 428 to 452; these read YLKAKNNCPNPPHSKSTIGPKK, LQSR…THVE, KENLPQDLPNSERKPNPESWTINKPQTNQTKSSLA, TVTEQKVKHSKPSTHPSVLQG, and NKTAPRTQAGGPTISGRGVPNGAQT. 3 stretches are compositionally biased toward polar residues: residues 76–86, 102–129, and 137–154; these read LQSRPANITRS, SESVSSNPNGKPPGNSQQLRGFGSSTDG, and GSLNVQKLKTTKQQVTDQ. Lys-195 participates in a covalent cross-link: Glycyl lysine isopeptide (Lys-Gly) (interchain with G-Cter in SUMO1); alternate. Residue Lys-195 forms a Glycyl lysine isopeptide (Lys-Gly) (interchain with G-Cter in SUMO2); alternate linkage. The span at 199–216 shows a compositional bias: polar residues; it reads ESWTINKPQTNQTKSSLA. Ser-744 is subject to Phosphoserine.

Belongs to the CKAP2 family. Post-translationally, ubiquitinated by the anaphase promoting complex/cyclosome (APC/C).

The protein resides in the cytoplasm. It is found in the cytoskeleton. The protein localises to the spindle pole. Its function is as follows. Microtubule-associated protein required for mitotic spindle formation and cell-cycle progression in neural progenitor cells. The polypeptide is Cytoskeleton-associated protein 2-like (CKAP2L) (Bos taurus (Bovine)).